Reading from the N-terminus, the 306-residue chain is Large ribosomal subunit protein mL45 (306 aa).

Belongs to the mitochondrion-specific ribosomal protein mL45 family. Component of the mitochondrial ribosome large subunit (39S) which comprises a 16S rRNA and about 50 distinct proteins.

It is found in the mitochondrion. In terms of biological role, component of the mitochondrial large ribosomal subunit (mt-LSU). Within the mitochondrial ribosomes, required to direct the nascent polypeptide toward the tunnel exit and position the exit at a distance from the membrane surface. This is Large ribosomal subunit protein mL45 (MRPL45) from Bos taurus (Bovine).